A 255-amino-acid polypeptide reads, in one-letter code: ATP synthase subunit b 1 (255 aa).

A helical transmembrane segment spans residues W5–L22.

The protein belongs to the ATPase B chain family. In terms of assembly, F-type ATPases have 2 components, F(1) - the catalytic core - and F(0) - the membrane proton channel. F(1) has five subunits: alpha(3), beta(3), gamma(1), delta(1), epsilon(1). F(0) has three main subunits: a(1), b(2) and c(10-14). The alpha and beta chains form an alternating ring which encloses part of the gamma chain. F(1) is attached to F(0) by a central stalk formed by the gamma and epsilon chains, while a peripheral stalk is formed by the delta and b chains.

Its subcellular location is the cell inner membrane. Functionally, f(1)F(0) ATP synthase produces ATP from ADP in the presence of a proton or sodium gradient. F-type ATPases consist of two structural domains, F(1) containing the extramembraneous catalytic core and F(0) containing the membrane proton channel, linked together by a central stalk and a peripheral stalk. During catalysis, ATP synthesis in the catalytic domain of F(1) is coupled via a rotary mechanism of the central stalk subunits to proton translocation. Its function is as follows. Component of the F(0) channel, it forms part of the peripheral stalk, linking F(1) to F(0). This Dinoroseobacter shibae (strain DSM 16493 / NCIMB 14021 / DFL 12) protein is ATP synthase subunit b 1.